The sequence spans 440 residues: General transcription factor IIE subunit 1 (440 aa).

The residue at position 2 (Ala-2) is an N-acetylalanine. The region spanning 14–104 is the HTH TFE/IIEalpha-type domain; the sequence is LKRLAKYVIR…NYRTLVNVVK (91 aa). Lys-67 carries the post-translational modification N6-acetyllysine. Zn(2+) contacts are provided by Cys-129, Cys-132, Cys-154, and Cys-157. The C4-type zinc finger occupies 129–157; the sequence is CPVCCSTFTDLEANQLFDPMTGTFRCTFC. Position 268 is a phosphoserine (Ser-268). The span at 333–353 shows a compositional bias: low complexity; it reads SSVTAGSVGAAAPVTAANGSD. A disordered region spans residues 333–395; the sequence is SSVTAGSVGA…EEFEEVADDP (63 aa). Acidic residues-rich tracts occupy residues 354-364 and 381-393; these read SESETSESDDD and EDEE…EVAD.

It belongs to the TFIIE alpha subunit family. Tetramer of two alpha and two beta chains. Interacts with TAF6/TAFII80. Interacts with ATF7IP. Interacts with SND1. Part of TBP-based Pol II pre-initiation complex (PIC), in which Pol II core assembles with general transcription factors and other specific initiation factors including GTF2E1, GTF2E2, GTF2F1, GTF2F2, TCEA1, ERCC2, ERCC3, GTF2H2, GTF2H3, GTF2H4, GTF2H5, GTF2A1, GTF2A2, GTF2B and TBP; this large multi-subunit PIC complex mediates DNA unwinding and targets Pol II core to the transcription start site where the first phosphodiester bond forms.

Its subcellular location is the nucleus. Functionally, recruits TFIIH to the initiation complex and stimulates the RNA polymerase II C-terminal domain kinase and DNA-dependent ATPase activities of TFIIH. Both TFIIH and TFIIE are required for promoter clearance by RNA polymerase. In Mus musculus (Mouse), this protein is General transcription factor IIE subunit 1 (Gtf2e1).